A 631-amino-acid polypeptide reads, in one-letter code: uncharacterized protein (631 aa).

Polar residues predominate over residues 1-19 (MSKMGSSSMGELQDGITQE). A disordered region spans residues 1–92 (MSKMGSSSMG…EENYPRLQTT (92 aa)). Residues 67 to 76 (KKKKKKKLKK) are compositionally biased toward basic residues. The Exonuclease domain maps to 277–426 (LAIDCEMVRT…EDALACVDLL (150 aa)). The segment covering 517–526 (ANRNTKQENN) has biased composition (polar residues). The segment at 517-540 (ANRNTKQENNSDTDTENDSVEEDQ) is disordered. The span at 527 to 540 (SDTDTENDSVEEDQ) shows a compositional bias: acidic residues.

Belongs to the REXO1/REXO3 family.

Its subcellular location is the nucleus. This is an uncharacterized protein from Schizosaccharomyces pombe (strain 972 / ATCC 24843) (Fission yeast).